The chain runs to 1020 residues: FERM domain-containing protein 4A (1020 aa).

The FERM domain occupies 5–307 (RRCQVHLLDD…SQHQFYLDRK (303 aa)). The segment at 343–405 (KGKIISGSSG…RLCLREAELT (63 aa)) is necessary for interaction with CYTH1. Low complexity predominate over residues 351 to 367 (SGSLLSSGSQESDSSQS). The interval 351-371 (SGSLLSSGSQESDSSQSAKKD) is disordered. The stretch at 367-401 (SAKKDMLAALKSRQEALEETLRQRLEELKRLCLRE) forms a coiled coil. At serine 515 the chain carries Phosphoserine. A disordered region spans residues 538–665 (DEDSQVTSTI…MPSTPDLRVR (128 aa)). The span at 542–551 (QVTSTISPLQ) shows a compositional bias: polar residues. A compositionally biased stretch (pro residues) spans 556–572 (GLPPRPPSSHNRPPPPQ). The segment at 565–920 (HNRPPPPQSL…QWYQRSTASH (356 aa)) is necessary for tight junction and adherens junction localization; Requires for interaction with PARD3. Phosphoserine is present on residues serine 590 and serine 601. Over residues 609-624 (VKKRSSHGHSSSHKRF) the composition is skewed to basic residues. Positions 626 to 658 (STGSCTEAGVSSSLQNSPIRSLPHWNSQSSMPS) are enriched in polar residues. Serine 666 and serine 696 each carry phosphoserine. 2 disordered regions span residues 698-741 (ESQG…HSSS) and 757-810 (AEDS…QSQP). Over residues 773-796 (RAAGALGSASSGSMPNLAARSGAA) the composition is skewed to low complexity. A phosphoserine mark is found at serine 785, serine 854, and serine 882. Disordered regions lie at residues 862–949 (KESW…STFV) and 961–1020 (CKAT…STDE). A compositionally biased stretch (basic and acidic residues) spans 893 to 910 (DGAHDKGSGRAAVSDELR). Residues 927-947 (SHTSSTSSDSGSQYSTSSQST) show a composition bias toward low complexity. Polar residues-rich tracts occupy residues 967 to 981 (ALPQSQRSSTPSSEI), 994 to 1004 (TWQTGEATENS), and 1011 to 1020 (ESPTHQSTDE).

Interacts (via coiled-coil domain) with CYTH1 (via coiled-coil domain). Interacts with PARD3 (via coiled-coil domain). Found in a complex with PARD3, CYTH1 and FRMD4A. Interacts with CYTH2. Interacts with CYTH3.

It localises to the cytoplasm. It is found in the cytoskeleton. The protein resides in the cell junction. Its subcellular location is the adherens junction. The protein localises to the tight junction. In terms of biological role, scaffolding protein that regulates epithelial cell polarity by connecting ARF6 activation with the PAR3 complex. Plays a redundant role with FRMD4B in epithelial polarization. May regulate MAPT secretion by activating ARF6-signaling. The polypeptide is FERM domain-containing protein 4A (Frmd4a) (Mus musculus (Mouse)).